The primary structure comprises 780 residues: Protein phosphatase 1 regulatory subunit 21 (780 aa).

Coiled-coil stretches lie at residues 1–209 (MASA…NLHE) and 556–605 (ESRE…DRLR). The interval 84 to 104 (EPRGKKNKKSGESSSQLSQEQ) is disordered. The segment covering 95 to 104 (ESSSQLSQEQ) has biased composition (low complexity). Position 652 is a phosphothreonine (Thr652). Residues 694–742 (AECRALSKRLALAEKSKETLTEEMRLASQNISRLQDELMTTKRSYEDQL) adopt a coiled-coil conformation.

Component of the FERRY complex, composed of five subunits: TBCK, PPP1R21, FERRY3, CRYZL1 and GATAD1, with a ratio of 1:2:1:2:4 respectively. PPP1R21 serves as a binding hub connecting all five complex subunits to mediate the binding to specific mitochondrial mRNAs. Interacts with the GTP-bound form of RAB5A (via its C-terminal region); linking the mRNP complex onto trafficking endosomes for active mRNA transport. Interacts with PPP1CA. In terms of tissue distribution, expressed at 16 dpc in the cortex (at protein level).

It localises to the early endosome. Functionally, component of the FERRY complex (Five-subunit Endosomal Rab5 and RNA/ribosome intermediary). The FERRY complex directly interacts with mRNAs and RAB5A, and functions as a RAB5A effector involved in the localization and the distribution of specific mRNAs most likely by mediating their endosomal transport. The complex recruits mRNAs and ribosomes to early endosomes through direct mRNA-interaction. In the complex, PPP1R21 serves as a binding hub connecting all five complex subunits and mediating the binding to mRNA and early endosomes via RAB5A. Putative regulator of protein phosphatase 1 (PP1) activity. May play a role in the endosomal sorting process or in endosome maturation pathway. The sequence is that of Protein phosphatase 1 regulatory subunit 21 (Ppp1r21) from Mus musculus (Mouse).